Consider the following 322-residue polypeptide: CMP-sialic acid transporter 1 (322 aa).

The Cytoplasmic portion of the chain corresponds to Met-1–Gln-2. The chain crosses the membrane as a helical span at residues Trp-3–Leu-23. Topologically, residues Ser-24–Asp-33 are lumenal. Residues Tyr-34 to Trp-54 traverse the membrane as a helical segment. The Cytoplasmic portion of the chain corresponds to Lys-55–Tyr-75. The helical transmembrane segment at Leu-76–Val-96 threads the bilayer. The Lumenal segment spans residues Asp-97–Thr-100. The chain crosses the membrane as a helical span at residues Tyr-101–Leu-120. At Lys-121–Asn-126 the chain is on the cytoplasmic side. The chain crosses the membrane as a helical span at residues Leu-127–Val-144. The Lumenal segment spans residues Lys-145–Ser-157. The helical transmembrane segment at Ala-158 to Val-178 threads the bilayer. Residues Tyr-179–Leu-198 are Cytoplasmic-facing. The chain crosses the membrane as a helical span at residues Tyr-199–Phe-219. Topologically, residues Glu-220 to Ser-233 are lumenal. A helical transmembrane segment spans residues Ile-234–Met-254. The Cytoplasmic portion of the chain corresponds to Lys-255–Lys-262. A helical membrane pass occupies residues Val-263–Val-283. At Arg-284 to Thr-286 the chain is on the lumenal side.

This sequence belongs to the nucleotide-sugar transporter family. CMP-Sialate:CMP antiporter (TC 2.A.7.12) subfamily.

The protein resides in the golgi apparatus membrane. Functionally, sugar transporter involved in the transport of CMP-sialic acid from the cytoplasm into the Golgi. May transport important nucleotide sugars such as CMP-Kdo (2-keto-3-deoxy-D-manno-octulosonic acid) in physiological conditions. The polypeptide is CMP-sialic acid transporter 1 (Oryza sativa subsp. indica (Rice)).